The following is a 174-amino-acid chain: Peptide methionine sulfoxide reductase MsrA (174 aa).

Cys11 is a catalytic residue.

It belongs to the MsrA Met sulfoxide reductase family.

The catalysed reaction is L-methionyl-[protein] + [thioredoxin]-disulfide + H2O = L-methionyl-(S)-S-oxide-[protein] + [thioredoxin]-dithiol. The enzyme catalyses [thioredoxin]-disulfide + L-methionine + H2O = L-methionine (S)-S-oxide + [thioredoxin]-dithiol. Functionally, has an important function as a repair enzyme for proteins that have been inactivated by oxidation. Catalyzes the reversible oxidation-reduction of methionine sulfoxide in proteins to methionine. In Pasteurella multocida (strain Pm70), this protein is Peptide methionine sulfoxide reductase MsrA.